Here is a 384-residue protein sequence, read N- to C-terminus: Spermidine/putrescine import ATP-binding protein PotA (384 aa).

In terms of domain architecture, ABC transporter spans 6 to 238; sequence ITFNNVSKTF…PINHFVANFI (233 aa). 40–47 is a binding site for ATP; it reads GASGSGKS.

This sequence belongs to the ABC transporter superfamily. Spermidine/putrescine importer (TC 3.A.1.11.1) family. In terms of assembly, the complex is composed of two ATP-binding proteins (PotA), two transmembrane proteins (PotB and PotC) and a solute-binding protein (PotD).

The protein resides in the cell membrane. The enzyme catalyses ATP + H2O + polyamine-[polyamine-binding protein]Side 1 = ADP + phosphate + polyamineSide 2 + [polyamine-binding protein]Side 1.. Functionally, part of the ABC transporter complex PotABCD involved in spermidine/putrescine import. Responsible for energy coupling to the transport system. The protein is Spermidine/putrescine import ATP-binding protein PotA of Streptococcus pyogenes serotype M12 (strain MGAS2096).